The primary structure comprises 1084 residues: Carbamoyl phosphate synthase large chain (1084 aa).

Positions 1–401 are carboxyphosphate synthetic domain; it reads MPRRQDVEKV…ALLKAVRSLE (401 aa). Residues R129, R169, G175, G176, R208, L210, E215, G241, V242, H243, Q284, and E298 each coordinate ATP. The ATP-grasp 1 domain maps to 133 to 327; it reads RALMKEIGEP…IAKVAAKIAV (195 aa). Mg(2+) is bound by residues Q284, E298, and N300. Mn(2+) is bound by residues Q284, E298, and N300. The segment at 402-546 is oligomerization domain; sequence TGRDGLFHPA…YSCYDEENEA (145 aa). The carbamoyl phosphate synthetic domain stretch occupies residues 547–947; sequence VSPPGRKAVV…ALYKALLASG (401 aa). Positions 672 to 862 constitute an ATP-grasp 2 domain; it reads DQLLSDLSIP…LAKVATQVIA (191 aa). ATP contacts are provided by R708, R747, E753, G778, V779, H780, S781, Q821, and E833. Mg(2+) is bound by residues Q821, E833, and N835. Positions 821, 833, and 835 each coordinate Mn(2+). One can recognise an MGS-like domain in the interval 948–1084; that stretch reads VRVPHRGTVL…VGISAVQDWV (137 aa). The tract at residues 948-1084 is allosteric domain; the sequence is VRVPHRGTVL…VGISAVQDWV (137 aa).

Belongs to the CarB family. Composed of two chains; the small (or glutamine) chain promotes the hydrolysis of glutamine to ammonia, which is used by the large (or ammonia) chain to synthesize carbamoyl phosphate. Tetramer of heterodimers (alpha,beta)4. It depends on Mg(2+) as a cofactor. Mn(2+) is required as a cofactor.

The enzyme catalyses hydrogencarbonate + L-glutamine + 2 ATP + H2O = carbamoyl phosphate + L-glutamate + 2 ADP + phosphate + 2 H(+). The catalysed reaction is hydrogencarbonate + NH4(+) + 2 ATP = carbamoyl phosphate + 2 ADP + phosphate + 2 H(+). The protein operates within amino-acid biosynthesis; L-arginine biosynthesis; carbamoyl phosphate from bicarbonate: step 1/1. Its pathway is pyrimidine metabolism; UMP biosynthesis via de novo pathway; (S)-dihydroorotate from bicarbonate: step 1/3. Large subunit of the glutamine-dependent carbamoyl phosphate synthetase (CPSase). CPSase catalyzes the formation of carbamoyl phosphate from the ammonia moiety of glutamine, carbonate, and phosphate donated by ATP, constituting the first step of 2 biosynthetic pathways, one leading to arginine and/or urea and the other to pyrimidine nucleotides. The large subunit (synthetase) binds the substrates ammonia (free or transferred from glutamine from the small subunit), hydrogencarbonate and ATP and carries out an ATP-coupled ligase reaction, activating hydrogencarbonate by forming carboxy phosphate which reacts with ammonia to form carbamoyl phosphate. The chain is Carbamoyl phosphate synthase large chain from Symbiobacterium thermophilum (strain DSM 24528 / JCM 14929 / IAM 14863 / T).